The sequence spans 253 residues: NAC transcription factor 32 (253 aa).

The NAC domain occupies 10–160 (FPPGFRFHPT…DWVLCRIYNK (151 aa)). A DNA-binding region spans residues 106 to 166 (VGIKKALVFY…IYNKKGVIEK (61 aa)).

As to expression, expressed in germinating seeds, roots, leaf veins, open flowers and silique stalks.

Its subcellular location is the nucleus. Its function is as follows. Transcriptional activator that positively regulates age-dependent senescence, dark-induced leaf senescence and stress-induced senescence. Regulates leaf senescence through the modulation of the expression of senescence-associated genes SGR1/NYE1, SAG113 and SAUR36/SAG201, which are involved in chlorophyll degradation, and abscisic acid (ABA) and auxin promotion of senescence, respectively. Promotes reactive oxygen species (ROS) production during age-dependent and stress-induced senescence. Positively regulates auxin-mediated responses in roots. Stress-responsive NAC transcription factor involved in ABA-inducible leaf senescence signaling. Required for normal seed development and morphology. This Arabidopsis thaliana (Mouse-ear cress) protein is NAC transcription factor 32.